Reading from the N-terminus, the 529-residue chain is Beta-hexosaminidase subunit alpha (529 aa).

The signal sequence occupies residues Met-1–Ala-22. Positions Leu-23–His-88 are excised as a propeptide. An intrachain disulfide couples Cys-58 to Cys-104. 3 N-linked (GlcNAc...) asparagine glycosylation sites follow: Asn-115, Asn-157, and Asn-295. A disulfide bridge connects residues Cys-277 and Cys-328. Glu-323 acts as the Proton donor in catalysis. The interval Asn-423–His-424 is critical for hydrolysis GM2 gangliosides. Cys-505 and Cys-522 are joined by a disulfide.

The protein belongs to the glycosyl hydrolase 20 family. As to quaternary structure, there are 3 beta-hexosaminidase isozymes: isozyme A (hexosaminidase A) is a heterodimer composed of one subunit alpha and one subunit beta (chain A and B); isozyme B (hexosaminidase B) is a homodimer of two beta subunits (two chains A and B); isozyme S (hexosaminidase S) is a homodimer of two alpha subunits. The composition of the dimer (isozyme A versus isozyme S) has a significant effect on the substrate specificity of the alpha subunit active site.

It is found in the lysosome. It catalyses the reaction Hydrolysis of terminal non-reducing N-acetyl-D-hexosamine residues in N-acetyl-beta-D-hexosaminides.. The catalysed reaction is N-acetyl-beta-D-galactosaminyl-(1-&gt;4)-beta-D-3-sulfogalactosyl-(1-&gt;4)-beta-D-glucosyl-(1&lt;-&gt;1')-ceramide + H2O = a beta-D-3-sulfogalactosyl-(1-&gt;4)-beta-D-glucosyl-(1&lt;-&gt;1')-ceramide + N-acetyl-beta-D-galactosamine. It carries out the reaction a ganglioside GM2 (d18:1(4E)) + H2O = a ganglioside GM3 (d18:1(4E)) + N-acetyl-beta-D-galactosamine. The enzyme catalyses a ganglioside GM2 + H2O = a ganglioside GM3 + N-acetyl-beta-D-galactosamine. It catalyses the reaction beta-D-GalNAc-(1-&gt;4)-alpha-L-IdoA-(1-&gt;3)-beta-D-GalNAc-4-sulfate-(1-&gt;4)-alpha-L-IdoA-(1-&gt;3)-D-GalNAc-4-sulfate + H2O = alpha-L-IdoA-(1-&gt;3)-beta-D-GalNAc-4-sulfate-(1-&gt;4)-alpha-L-IdoA-(1-&gt;3)-D-GalNAc-4-sulfate + N-acetyl-D-galactosamine. The catalysed reaction is N-acetyl-beta-D-6-sulfogalactosaminyl-(1-&gt;4)-alpha-L-iduronyl-(1-&gt;3)-N-acetyl-D-6-sulfogalactosamine + H2O = alpha-L-iduronyl-(1-&gt;3)-N-acetyl-D-6-sulfogalactosamine + N-acetyl-D-6-sulfogalactosamine. With respect to regulation, addition of GM2A stimulates the hydrolysis of sulfated glycosphingolipid SM2 and the ganglioside GM2. Hydrolyzes the non-reducing end N-acetyl-D-hexosamine and/or sulfated N-acetyl-D-hexosamine of glycoconjugates, such as the oligosaccharide moieties from proteins and neutral glycolipids, or from certain mucopolysaccharides. The isozyme S is as active as the isozyme A on the anionic bis-sulfated glycans, the chondroitin-6-sulfate trisaccharide (C6S-3), and the dermatan sulfate pentasaccharide, and the sulfated glycosphingolipid SM2. The isozyme B does not hydrolyze each of these substrates, however hydrolyzes efficiently neutral oligosaccharide. Only the isozyme A is responsible for the degradation of GM2 gangliosides in the presence of GM2A. The sequence is that of Beta-hexosaminidase subunit alpha from Bos taurus (Bovine).